The chain runs to 91 residues: Large ribosomal subunit protein uL23 (91 aa).

The protein belongs to the universal ribosomal protein uL23 family. Part of the 50S ribosomal subunit. Contacts protein L29, and trigger factor when it is bound to the ribosome.

One of the early assembly proteins it binds 23S rRNA. One of the proteins that surrounds the polypeptide exit tunnel on the outside of the ribosome. Forms the main docking site for trigger factor binding to the ribosome. In Staphylococcus haemolyticus (strain JCSC1435), this protein is Large ribosomal subunit protein uL23.